A 366-amino-acid polypeptide reads, in one-letter code: MTPEHLPTEQYEAQLAEKVVRLQSMMAPFSDLVPEVFRSPVSHYRMRAEFRIWHDGDDLYHIIFDQQTKSRIRVDSFPAASELINQLMTAMIAGVRNNPVLRHKLFQIDYLTTLSNQAVVSLLYHKKLDDEWRQEAEALRDALRAQNLNVHLIGRATKTKIALDQDYIDERLPVAGKEMIYRQVENSFTQPNAAMNIQMLEWALDVTKGSKGDLLELYCGNGNFSLALARNFDRVLATEIAKPSVAAAQYNITANHIDNVQIIRMAAEEFTQAMNGVREFNRLQGIDLKSYQFETIFVDPPRSGLDSETEKMVQAYPRILYISCNPETLCKNLETLSQTHKVERLALFDQFPYTHHMECGVLLTAK.

Residues Gln190, Tyr218, Asn223, Glu239, and Asp299 each contribute to the S-adenosyl-L-methionine site. The Nucleophile role is filled by Cys324. Glu358 serves as the catalytic Proton acceptor.

Belongs to the class I-like SAM-binding methyltransferase superfamily. RNA M5U methyltransferase family. TrmA subfamily.

It carries out the reaction uridine(54) in tRNA + S-adenosyl-L-methionine = 5-methyluridine(54) in tRNA + S-adenosyl-L-homocysteine + H(+). The catalysed reaction is uridine(341) in tmRNA + S-adenosyl-L-methionine = 5-methyluridine(341) in tmRNA + S-adenosyl-L-homocysteine + H(+). In terms of biological role, dual-specificity methyltransferase that catalyzes the formation of 5-methyluridine at position 54 (m5U54) in all tRNAs, and that of position 341 (m5U341) in tmRNA (transfer-mRNA). The protein is tRNA/tmRNA (uracil-C(5))-methyltransferase of Shigella flexneri serotype 5b (strain 8401).